Consider the following 587-residue polypeptide: MANRLLIYGLILWVSIIGSFALDRNKTAQNAKIGLHDTTVITTGSTTNVQKEHSSPLSTGSLRTHDFRQASKVDIRQADIRENGERKEQDALTQPATPRNPGDSSNSFLSFDEWKKVKSKEHSSGPERHLSRVREPVDPSCYKEKECIGEELEIDLGFLTNKNEWSEREENQKGFNEEKDIEKVYKKKFNYASLDCAATIVKSNPEAIGATSTLIESKDKYLLNPCSAPQQFIVIELCEDILVEEIEIANYEFFSSTFKRFRVSVSDRIPMVKNEWTILGEFEARNSRELQKFQIHNPQIWASYLKIEILSHYEDEFYCPISLIKVYGKSMMDEFKIDQLKAQEDKEQSIGTNNINNLNEQNIQDRCNNIETRLETPNTSNLSDLAGALSCTSKLIPLKFDEFFKVLNASFCPSKQMISSSSSSAVPVIPEESIFKNIMKRLSQLETNSSLTVSYIEEQSKLLSKSFEQLEMAHEAKFSHLVTIFNETMMSNLDLLNNFANQLKDQSLRILEEQKLENDKFTNRHLLHLERLEKEVSFQRRIVYASFFAFVGLISYLLITRELYFEDFEESKNGAIEKADIVQQAIR.

The first 21 residues, 1 to 21 (MANRLLIYGLILWVSIIGSFA), serve as a signal peptide directing secretion. The Lumenal segment spans residues 22 to 541 (LDRNKTAQNA…LEKEVSFQRR (520 aa)). N25 carries N-linked (GlcNAc...) asparagine glycosylation. The segment at 44 to 108 (GSTTNVQKEH…RNPGDSSNSF (65 aa)) is disordered. Over residues 63 to 90 (RTHDFRQASKVDIRQADIRENGERKEQD) the composition is skewed to basic and acidic residues. The segment covering 91-108 (ALTQPATPRNPGDSSNSF) has biased composition (polar residues). One can recognise an SUN domain in the interval 163–331 (NEWSEREENQ…SLIKVYGKSM (169 aa)). N-linked (GlcNAc...) asparagine glycosylation is found at N378, N381, N408, N448, and N486. The helical transmembrane segment at 542–562 (IVYASFFAFVGLISYLLITRE) threads the bilayer. Topologically, residues 563 to 587 (LYFEDFEESKNGAIEKADIVQQAIR) are cytoplasmic.

The protein belongs to the SLP1 family. Interacts with EMP65.

The protein resides in the endoplasmic reticulum membrane. In terms of biological role, may be involved in membrane protein folding. Required for localization of MPS3 to the nuclear envelope. This is an uncharacterized protein from Saccharomyces cerevisiae (strain ATCC 204508 / S288c) (Baker's yeast).